The primary structure comprises 146 residues: Hemoglobin subunit beta (146 aa).

Valine 1 bears the N-acetylvaline mark. In terms of domain architecture, Globin spans 2-146 (HLTPEEKTAV…VANALAHKYH (145 aa)). Threonine 12 is subject to Phosphothreonine. At serine 44 the chain carries Phosphoserine. Residue lysine 59 is modified to N6-acetyllysine. Histidine 63 is a heme b binding site. Lysine 82 is modified (N6-acetyllysine). Heme b is bound at residue histidine 92. At cysteine 93 the chain carries S-nitrosocysteine. At lysine 144 the chain carries N6-acetyllysine.

It belongs to the globin family. Heterotetramer of two alpha chains and two beta chains. As to expression, red blood cells.

In terms of biological role, involved in oxygen transport from the lung to the various peripheral tissues. The chain is Hemoglobin subunit beta (HBB) from Chlorocebus aethiops (Green monkey).